The following is a 98-amino-acid chain: NADH-ubiquinone oxidoreductase chain 4L (98 aa).

The next 3 membrane-spanning stretches (helical) occupy residues 1–21 (MPII…GMLI), 29–49 (SLLC…LMAL), and 58–78 (IVPV…LALL).

It belongs to the complex I subunit 4L family. As to quaternary structure, core subunit of respiratory chain NADH dehydrogenase (Complex I) which is composed of 45 different subunits.

It localises to the mitochondrion inner membrane. The catalysed reaction is a ubiquinone + NADH + 5 H(+)(in) = a ubiquinol + NAD(+) + 4 H(+)(out). In terms of biological role, core subunit of the mitochondrial membrane respiratory chain NADH dehydrogenase (Complex I) which catalyzes electron transfer from NADH through the respiratory chain, using ubiquinone as an electron acceptor. Part of the enzyme membrane arm which is embedded in the lipid bilayer and involved in proton translocation. This Semnopithecus entellus (Northern plains gray langur) protein is NADH-ubiquinone oxidoreductase chain 4L (MT-ND4L).